The primary structure comprises 251 residues: Triosephosphate isomerase (251 aa).

Residue 9-11 (NWK) coordinates substrate. His95 acts as the Electrophile in catalysis. Glu167 acts as the Proton acceptor in catalysis. Residues Gly173, Ser212, and 233–234 (GG) contribute to the substrate site.

The protein belongs to the triosephosphate isomerase family. As to quaternary structure, homodimer.

The protein resides in the cytoplasm. The enzyme catalyses D-glyceraldehyde 3-phosphate = dihydroxyacetone phosphate. The protein operates within carbohydrate biosynthesis; gluconeogenesis. It participates in carbohydrate degradation; glycolysis; D-glyceraldehyde 3-phosphate from glycerone phosphate: step 1/1. Involved in the gluconeogenesis. Catalyzes stereospecifically the conversion of dihydroxyacetone phosphate (DHAP) to D-glyceraldehyde-3-phosphate (G3P). The protein is Triosephosphate isomerase of Pseudomonas putida (strain ATCC 700007 / DSM 6899 / JCM 31910 / BCRC 17059 / LMG 24140 / F1).